We begin with the raw amino-acid sequence, 267 residues long: Putative carbamate hydrolase RutD (267 aa).

The region spanning 23–139 (VVLLSSGLGG…IQRCFDTRIH (117 aa)) is the AB hydrolase-1 domain.

This sequence belongs to the AB hydrolase superfamily. Hydrolase RutD family.

The catalysed reaction is carbamate + 2 H(+) = NH4(+) + CO2. Functionally, involved in pyrimidine catabolism. May facilitate the hydrolysis of carbamate, a reaction that can also occur spontaneously. The sequence is that of Putative carbamate hydrolase RutD from Caulobacter segnis (strain ATCC 21756 / DSM 7131 / JCM 7823 / NBRC 15250 / LMG 17158 / TK0059) (Mycoplana segnis).